The primary structure comprises 84 residues: Sporulation-specific transcription factor SpoVIF (84 aa).

The protein resides in the cytoplasm. Transcription factor involved in spore coat assembly and spore resistance. Required for gene regulation during the latter stages of sporulation. Regulates the transcription of at least cgeA, cotG and cotS. May directly or indirectly control the function of the GerE protein. This is Sporulation-specific transcription factor SpoVIF from Bacillus subtilis (strain 168).